Consider the following 374-residue polypeptide: DNA replication and repair protein RecF (374 aa).

Residue 30-37 participates in ATP binding; the sequence is GENAQGKT.

This sequence belongs to the RecF family.

The protein localises to the cytoplasm. Its function is as follows. The RecF protein is involved in DNA metabolism; it is required for DNA replication and normal SOS inducibility. RecF binds preferentially to single-stranded, linear DNA. It also seems to bind ATP. This chain is DNA replication and repair protein RecF, found in Pediococcus pentosaceus (strain ATCC 25745 / CCUG 21536 / LMG 10740 / 183-1w).